The following is a 197-amino-acid chain: 22.7 kDa class IV heat shock protein (197 aa).

The first 28 residues, 1 to 28 (MSLKPLNMLLVPFLLLILAADFPLKAKA), serve as a signal peptide directing secretion. The sHSP domain occupies 68-184 (PSITLSHARV…GPRMVSIVEE (117 aa)). The Prevents secretion from ER motif lies at 194–197 (DELK).

This sequence belongs to the small heat shock protein (HSP20) family. In terms of assembly, forms oligomeric structures.

The protein resides in the endoplasmic reticulum lumen. This chain is 22.7 kDa class IV heat shock protein (HSP22.7), found in Pisum sativum (Garden pea).